The primary structure comprises 288 residues: Phosphate import ATP-binding protein PstB (288 aa).

Residues 42–283 (IRDLNFYYEN…PKEKKTRDYI (242 aa)) enclose the ABC transporter domain. 74–81 (GPSGCGKS) contributes to the ATP binding site.

This sequence belongs to the ABC transporter superfamily. Phosphate importer (TC 3.A.1.7) family. In terms of assembly, the complex is composed of two ATP-binding proteins (PstB), two transmembrane proteins (PstC and PstA) and a solute-binding protein (PstS).

It is found in the cell membrane. The catalysed reaction is phosphate(out) + ATP + H2O = ADP + 2 phosphate(in) + H(+). Functionally, part of the ABC transporter complex PstSACB involved in phosphate import. Responsible for energy coupling to the transport system. This is Phosphate import ATP-binding protein PstB from Malacoplasma penetrans (strain HF-2) (Mycoplasma penetrans).